The following is a 231-amino-acid chain: NADH-ubiquinone oxidoreductase chain 4 (231 aa).

Helical transmembrane passes span 1–21 (PIAGSMVLAAILLKLGGYGII), 34–54 (MFLPLVVLALWGAVLANLTCL), 63–85 (IAYSSISHMGLVAAAIIIQTPWG), 89–111 (GMTLMIAHGFTSSALFCLANTTY), 118–138 (ILILTRGFHNILPMATTWWLL), and 156–176 (LLIMSALFNWCPTTIIMLGLS).

Belongs to the complex I subunit 4 family.

It is found in the mitochondrion membrane. It carries out the reaction a ubiquinone + NADH + 5 H(+)(in) = a ubiquinol + NAD(+) + 4 H(+)(out). Functionally, core subunit of the mitochondrial membrane respiratory chain NADH dehydrogenase (Complex I) that is believed to belong to the minimal assembly required for catalysis. Complex I functions in the transfer of electrons from NADH to the respiratory chain. The immediate electron acceptor for the enzyme is believed to be ubiquinone. This Calloselasma rhodostoma (Malayan pit viper) protein is NADH-ubiquinone oxidoreductase chain 4 (MT-ND4).